The chain runs to 397 residues: Enoyl-[acyl-carrier-protein] reductase [NADH] (397 aa).

NAD(+)-binding positions include G48–Y53, L74–E75, D111–A112, and L139–A140. Y225 is a substrate binding site. The active-site Proton donor is Y235. NAD(+) is bound by residues K244 and V273–T275.

Belongs to the TER reductase family. In terms of assembly, monomer.

It carries out the reaction a 2,3-saturated acyl-[ACP] + NAD(+) = a (2E)-enoyl-[ACP] + NADH + H(+). It participates in lipid metabolism; fatty acid biosynthesis. Functionally, involved in the final reduction of the elongation cycle of fatty acid synthesis (FAS II). Catalyzes the reduction of a carbon-carbon double bond in an enoyl moiety that is covalently linked to an acyl carrier protein (ACP). This Tolumonas auensis (strain DSM 9187 / NBRC 110442 / TA 4) protein is Enoyl-[acyl-carrier-protein] reductase [NADH].